The following is a 220-amino-acid chain: Adenylate kinase (220 aa).

12–17 (GAGKGT) contributes to the ATP binding site. Residues 32-62 (STGDIFRDIVKKENDELGKKIKEIMERGELV) form an NMP region. Residues Thr33, Arg38, 60-62 (ELV), 88-91 (GYPR), and Gln95 contribute to the AMP site. The tract at residues 129–166 (ARRICPKCGRIYNLISLPPKEDELCDDCKVKLVQREDD) is LID. ATP is bound at residue Arg130. Residues Cys133 and Cys136 each coordinate Zn(2+). 139–140 (IY) contacts ATP. Positions 153 and 156 each coordinate Zn(2+). Arg163 and Arg174 together coordinate AMP. Ile202 contributes to the ATP binding site.

The protein belongs to the adenylate kinase family. Monomer.

Its subcellular location is the cytoplasm. It carries out the reaction AMP + ATP = 2 ADP. It functions in the pathway purine metabolism; AMP biosynthesis via salvage pathway; AMP from ADP: step 1/1. Functionally, catalyzes the reversible transfer of the terminal phosphate group between ATP and AMP. Plays an important role in cellular energy homeostasis and in adenine nucleotide metabolism. The protein is Adenylate kinase of Thermotoga petrophila (strain ATCC BAA-488 / DSM 13995 / JCM 10881 / RKU-1).